Reading from the N-terminus, the 161-residue chain is uncharacterized protein (161 aa).

The RING-type zinc finger occupies 72-134 (CAICLDNLQN…EAQQTCPTCR (63 aa)). Positions 140–161 (DKEVEEEERQRNLEELHDSMYG) are disordered.

This is an uncharacterized protein from Caenorhabditis elegans.